The chain runs to 338 residues: Anthranilate phosphoribosyltransferase (338 aa).

5-phospho-alpha-D-ribose 1-diphosphate-binding positions include Gly81, 84–85, Thr89, 91–94, 109–117, and Ala121; these read GD, NVST, and KHGNRALSS. Anthranilate is bound at residue Gly81. Residue Ser93 coordinates Mg(2+). Anthranilate is bound at residue Asn112. An anthranilate-binding site is contributed by Arg167. Positions 225 and 226 each coordinate Mg(2+).

The protein belongs to the anthranilate phosphoribosyltransferase family. In terms of assembly, homodimer. Requires Mg(2+) as cofactor.

It catalyses the reaction N-(5-phospho-beta-D-ribosyl)anthranilate + diphosphate = 5-phospho-alpha-D-ribose 1-diphosphate + anthranilate. The protein operates within amino-acid biosynthesis; L-tryptophan biosynthesis; L-tryptophan from chorismate: step 2/5. Catalyzes the transfer of the phosphoribosyl group of 5-phosphorylribose-1-pyrophosphate (PRPP) to anthranilate to yield N-(5'-phosphoribosyl)-anthranilate (PRA). In Chelativorans sp. (strain BNC1), this protein is Anthranilate phosphoribosyltransferase.